The primary structure comprises 749 residues: Cytosolic phospholipase A2 (749 aa).

Positions 1–124 constitute a C2 domain; that stretch reads MASIDPYQHI…GEKKQVPFTF (124 aa). The interval 1–178 is phospholipid binding; it reads MASIDPYQHI…LRKLLGPEKT (178 aa). The Ca(2+) site is built by Asp40, Thr41, Asp43, Asn65, Asp93, Ala94, and Asn95. Residues 138–740 form the PLA2c domain; sequence VCSSTDLRFS…NDVEARKLLH (603 aa). Ser229 acts as the Nucleophile in catalysis. The segment at 417 to 458 is disordered; the sequence is MEEEIENLKPKHILGNDSSDSDDEMQEPKGTENSKAEEEYQR. Positions 442–457 are enriched in basic and acidic residues; sequence QEPKGTENSKAEEEYQ. The active-site Proton acceptor is the Asp549.

The protein localises to the cytoplasm. The protein resides in the cytoplasmic vesicle. The enzyme catalyses a 1,2-diacyl-sn-glycero-3-phosphocholine + H2O = a 1-acyl-sn-glycero-3-phosphocholine + a fatty acid + H(+). The catalysed reaction is a 1-acyl-sn-glycero-3-phosphocholine + H2O = sn-glycerol 3-phosphocholine + a fatty acid + H(+). With respect to regulation, stimulated by agonists such as ATP, EGF, thrombin and bradykinin as well as by cytosolic Ca(2+). Selectively hydrolyzes arachidonyl phospholipids in the sn-2 position releasing arachidonic acid. Together with its lysophospholipid activity, it is implicated in the initiation of the inflammatory response. This Xenopus tropicalis (Western clawed frog) protein is Cytosolic phospholipase A2 (pla2g4a).